Reading from the N-terminus, the 754-residue chain is RNA exonuclease 5 (754 aa).

The tract at residues 1 to 36 (MELEEEENPRKRKETPNSALTTELDRPSWDVQDPEP) is disordered. In terms of domain architecture, Exonuclease spans 222 to 370 (LFGLDCEVCL…EDARTALELV (149 aa)). 2 RRM domains span residues 488 to 562 (STIY…RLLT) and 583 to 662 (GTIY…RHLQ).

This Rattus norvegicus (Rat) protein is RNA exonuclease 5 (Rexo5).